A 705-amino-acid chain; its full sequence is p-hydroxybenzoic acid--AMP ligase FadD22 (705 aa).

The Carrier domain occupies 541–619 (ERQRLVVDAV…GLAQYLEAEL (79 aa)). At Ser-579 the chain carries O-(pantetheine 4'-phosphoryl)serine.

The protein belongs to the ATP-dependent AMP-binding enzyme family.

The catalysed reaction is holo-[4-hydroxyphenylalkanoate synthase] + 4-hydroxybenzoate + ATP = 4-hydroxyphenyl-[4-hydroxyphenylalkanoate synthase] + AMP + diphosphate. It participates in lipid metabolism; fatty acid biosynthesis. In terms of biological role, catalyzes the adenylation of p-hydroxybenzoic acid (pHBA) to form p-hydroxybenzoic acid-AMP (pHBA-AMP), which is converted directly to p-hydroxybenzoyl-S-FadD22 (pHBA-S-FAdD22) thioester intermediate in a CoA-independent manner by attack of the phosphopantetheine thiol of FadD22. Usually, this intermediate primes the biosynthesis of the phenolphthiocerol (PPOL) by presenting the pHBA starter unit for elongation by Pks15/1, but M.tuberculosis lacks Pks15/1 due to a natural frameshift and thus is unable to produce PPOL. In Mycobacterium tuberculosis (strain CDC 1551 / Oshkosh), this protein is p-hydroxybenzoic acid--AMP ligase FadD22 (fadD22).